The chain runs to 94 residues: MRIEVIRREENLLEFYLEGEDHTFANLLTETLHENEHVTFAGYTIEHPITMARKPRFKVVTDGKITPEKALEEAAQKIFDRAREVLEAWKAAIE.

This sequence belongs to the archaeal Rpo11/eukaryotic RPB11/RPC19 RNA polymerase subunit family. As to quaternary structure, part of the RNA polymerase complex.

It localises to the cytoplasm. It catalyses the reaction RNA(n) + a ribonucleoside 5'-triphosphate = RNA(n+1) + diphosphate. Functionally, DNA-dependent RNA polymerase (RNAP) catalyzes the transcription of DNA into RNA using the four ribonucleoside triphosphates as substrates. The chain is DNA-directed RNA polymerase subunit Rpo11 from Thermococcus kodakarensis (strain ATCC BAA-918 / JCM 12380 / KOD1) (Pyrococcus kodakaraensis (strain KOD1)).